A 351-amino-acid chain; its full sequence is MKQVPEFHEDFYIPIPLDINNLSAYSPFLVPQDHLGNQGIFMAMSVFMFFIFIGGASINILTILCTIQFKKLRSHLNYILVNLSIANLFVAIFGSPLSFYSFFNRYFIFGATACKIEGFLATLGGMVGLWSLAVVAFERWLVICKPLGNFTFKTPHAIAGCILPWISALAASLPPLFGWSRYIPEGLQCSCGPDWYTTNNKYNNESYVMFLFCFCFAVPFGTIVFCYGQLLITLKLAAKAQADSASTQKAEREVTKMVVVMVLGFLVCWAPYASFSLWIVSHRGEEFDLRMATIPSCLSKASTVYNPVIYVLMNKQFRSCMMKMVCGKNIEEDEASTSSQVTQVSSVAPEK.

The Extracellular portion of the chain corresponds to 1–40 (MKQVPEFHEDFYIPIPLDINNLSAYSPFLVPQDHLGNQGI). Asparagine 21 carries an N-linked (GlcNAc...) asparagine glycan. A helical membrane pass occupies residues 41 to 65 (FMAMSVFMFFIFIGGASINILTILC). The Cytoplasmic portion of the chain corresponds to 66–77 (TIQFKKLRSHLN). Residues 78-103 (YILVNLSIANLFVAIFGSPLSFYSFF) form a helical membrane-spanning segment. Over 104–117 (NRYFIFGATACKIE) the chain is Extracellular. The cysteines at positions 114 and 191 are disulfide-linked. Residues 118–137 (GFLATLGGMVGLWSLAVVAF) traverse the membrane as a helical segment. Over 138-156 (ERWLVICKPLGNFTFKTPH) the chain is Cytoplasmic. A helical membrane pass occupies residues 157–180 (AIAGCILPWISALAASLPPLFGWS). Topologically, residues 181–206 (RYIPEGLQCSCGPDWYTTNNKYNNES) are extracellular. The chain crosses the membrane as a helical span at residues 207–234 (YVMFLFCFCFAVPFGTIVFCYGQLLITL). The Cytoplasmic portion of the chain corresponds to 235-256 (KLAAKAQADSASTQKAEREVTK). A helical membrane pass occupies residues 257–280 (MVVVMVLGFLVCWAPYASFSLWIV). At 281–288 (SHRGEEFD) the chain is on the extracellular side. The chain crosses the membrane as a helical span at residues 289 to 313 (LRMATIPSCLSKASTVYNPVIYVLM). Position 300 is an N6-(retinylidene)lysine (lysine 300). Residues 314–351 (NKQFRSCMMKMVCGKNIEEDEASTSSQVTQVSSVAPEK) are Cytoplasmic-facing.

Belongs to the G-protein coupled receptor 1 family. Opsin subfamily. In terms of processing, phosphorylated on some or all of the serine and threonine residues present in the C-terminal region. As to expression, the color pigments are found in the cone photoreceptor cells.

It is found in the membrane. Its function is as follows. Visual pigments are the light-absorbing molecules that mediate vision. They consist of an apoprotein, opsin, covalently linked to cis-retinal. This Carassius auratus (Goldfish) protein is Blue-sensitive opsin.